The chain runs to 467 residues: tRNA-splicing endonuclease subunit SEN54 (467 aa).

Disordered regions lie at residues 1 to 32 and 374 to 413; these read MQFAGKKTDQVTTSNPGFEEEEEEEEELQQDW and KRSAKSQTEKSESSMKASFQKKTAQSSTKKKRKAYPPHIQ. Over residues 18-29 the composition is skewed to acidic residues; sequence FEEEEEEEEELQ. Positions 401–413 are enriched in basic residues; it reads TKKKRKAYPPHIQ.

Belongs to the SEN54 family. As to quaternary structure, tRNA splicing endonuclease is a heterotetramer composed of SEN2, SEN15, SEN34 and SEN54. Interacts directly with SEN2.

It localises to the nucleus. It is found in the endomembrane system. The protein localises to the mitochondrion outer membrane. In terms of biological role, non-catalytic subunit of the tRNA-splicing endonuclease complex, a complex responsible for identification and cleavage of the splice sites in pre-tRNA. It cleaves pre-tRNA at the 5' and 3' splice sites to release the intron. The products are an intron and two tRNA half-molecules bearing 2',3' cyclic phosphate and 5'-OH termini. There are no conserved sequences at the splice sites, but the intron is invariably located at the same site in the gene, placing the splice sites an invariant distance from the constant structural features of the tRNA body. May be required to embody the molecular ruler of the complex. This chain is tRNA-splicing endonuclease subunit SEN54 (SEN54), found in Saccharomyces cerevisiae (strain ATCC 204508 / S288c) (Baker's yeast).